We begin with the raw amino-acid sequence, 269 residues long: Hydroxyethylthiazole kinase (269 aa).

Residue M46 coordinates substrate. ATP-binding residues include R122 and T168. Residue G195 coordinates substrate.

Belongs to the Thz kinase family. Mg(2+) is required as a cofactor.

It carries out the reaction 5-(2-hydroxyethyl)-4-methylthiazole + ATP = 4-methyl-5-(2-phosphooxyethyl)-thiazole + ADP + H(+). Its pathway is cofactor biosynthesis; thiamine diphosphate biosynthesis; 4-methyl-5-(2-phosphoethyl)-thiazole from 5-(2-hydroxyethyl)-4-methylthiazole: step 1/1. Its function is as follows. Catalyzes the phosphorylation of the hydroxyl group of 4-methyl-5-beta-hydroxyethylthiazole (THZ). This chain is Hydroxyethylthiazole kinase, found in Geobacillus kaustophilus (strain HTA426).